Consider the following 160-residue polypeptide: Cyanate hydratase (160 aa).

Catalysis depends on residues R100, E103, and S126.

This sequence belongs to the cyanase family.

The catalysed reaction is cyanate + hydrogencarbonate + 3 H(+) = NH4(+) + 2 CO2. In terms of biological role, catalyzes the reaction of cyanate with bicarbonate to produce ammonia and carbon dioxide. In Aspergillus oryzae (strain ATCC 42149 / RIB 40) (Yellow koji mold), this protein is Cyanate hydratase.